Reading from the N-terminus, the 977-residue chain is MNQASSRIRIALSGRIETALENIYRKHNLTPINDETRQRLSSIPENLGFELVRKVFSLQAGLIYNLDSFIVSKVNQAVSFTGYPQPANSLSPSGRHVSRVLQEEMSVDSDAPSPKSLKSEDKGGSLHIPQLVALGELEFKKVFLLLSYIPGQHVGQVITADEIRLWKDLPMVEYEAAVWDRLGRHYCPQKDRRMLQWDSGKTHYYQCNVAPNGSYTFKVLSALQGPLLEHTGTHLHKVLGDDNVLTVKFADVQKSSSTYSIDHYFTYKGIAKNGIMIGLRRYQFFVFKDGGKEEKKKDLSTKKVKCYFIRTDSTAFYDMQNPYILTGKSIYEARMHFMHVHRAPTLANYMARFSLILSKTKTLEVDMTGITFDQIDDIHCHDQDGKDVLDKNKKPCIHSDGTGYISEDLARMCPLNIFKGKCLRSESIQEACYQDPPLLIQFRMFYDGYAVKGTFLLNKKLCPRTVQVRPSMIKVSKDPSLSNFSTFNALEVVTTSNPPKRTKLSKNLVALLSYGGIPNEFFLDILLNTLEESKSIFYNKRAALNAALNYGEMDDQNAAQMILVGIPLDEPHLKNYLSILLKTEKNDLKAGKLPVTESYYLMGTVDPTGALKEDEVCVILESGQISGEVLVYRNPGLHFGDIHILKATYVKALEEYVGNSKFAVFFPQKGPRSLGDEIAGGDFDGDMYFISRNPELLENFKPSEPWVSLTPPSKSNSGRAPSQLSPEELEEELFEMFLTAGFHASNVIGIAADSWLTIMDRFLILGDDRAEEKAEMKKKMLELIDIYYDALDAPKKGDKVYLPNKLKPDIFPHYMERDKKFQSTSILGLIFDFVKSQTTEEPSPSSEISKLPCFEDEPVSEFHMQKCRLWYDNYRTEMTQAMKTDKDESANEVIQRYKQEFYGAAGFEDSKKSLEELYPQALALYKIVYDYAIHAGVSKCRFVWKVAGPVLCRFYLNKKMQEKCLVCAPSVLKELWG.

Residues 103–122 (EEMSVDSDAPSPKSLKSEDK) are disordered.

This sequence belongs to the RdRP family.

The enzyme catalyses RNA(n) + a ribonucleoside 5'-triphosphate = RNA(n+1) + diphosphate. Functionally, probably involved in the RNA silencing pathway and required for the generation of small interfering RNAs (siRNAs). This is Probable RNA-dependent RNA polymerase 5 (RDR5) from Arabidopsis thaliana (Mouse-ear cress).